A 526-amino-acid polypeptide reads, in one-letter code: Tyrosine-protein kinase transforming protein Src (526 aa).

The span at 1–15 shows a compositional bias: basic residues; that stretch reads MGSSKSKPKGPSQRR. Residues 1 to 59 are disordered; that stretch reads MGSSKSKPKGPSQRRRSLEPPDSTHHGGFPASQTPNKTAAPDTHRTPSRSFGTVATEPK. A lipid anchor (N-myristoyl glycine; by host) is attached at glycine 2. Positions 16–25 are enriched in basic and acidic residues; that stretch reads RSLEPPDSTH. An SH3 domain is found at 81-142; that stretch reads GGVTTFVALY…PSNYVAPSDS (62 aa). The SH2 domain maps to 148–245; the sequence is WYFGKITRRE…GLCHRLTNVC (98 aa). Residues 267 to 517 enclose the Protein kinase domain; it reads LRLEVKLGQG…TFEYLQAQLL (251 aa). ATP contacts are provided by residues 273–281 and lysine 295; that span reads LGQGCFGEV. The Proton acceptor role is filled by aspartate 386. Position 416 is a phosphotyrosine; by autocatalysis (tyrosine 416).

This sequence belongs to the protein kinase superfamily. Tyr protein kinase family. SRC subfamily. In terms of assembly, homodimer. The phosphorylated form is termed pp60v-src.

It carries out the reaction L-tyrosyl-[protein] + ATP = O-phospho-L-tyrosyl-[protein] + ADP + H(+). Its function is as follows. This phosphoprotein, required for both the initiation and the maintenance of neoplastic transformation, is a protein kinase that catalyzes the phosphorylation of tyrosine residues in vitro. This is Tyrosine-protein kinase transforming protein Src (V-SRC) from Rous sarcoma virus subgroup E (strain Schmidt-Ruppin) (RSV-SR-E).